Reading from the N-terminus, the 687-residue chain is Mu-like prophage FluMu transposase A (687 aa).

The HTH Mu-type domain maps to 8-74 (THYSVYELAN…ELLLKTTPEQ (67 aa)). Residues 398-417 (PIERAFSHGGLGDYVDKHLL) constitute a DNA-binding region (H-T-H motif).

Its function is as follows. This transposase is essential for integration, replication-transposition, and excision of Mu-like viral DNA. In Haemophilus influenzae (strain ATCC 51907 / DSM 11121 / KW20 / Rd), this protein is Mu-like prophage FluMu transposase A.